The primary structure comprises 273 residues: HTH-type transcriptional activator RhaS (273 aa).

Positions 174–272 (YQLLDWLQNN…SQSPRDLRSQ (99 aa)) constitute an HTH araC/xylS-type domain. DNA-binding regions (H-T-H motif) lie at residues 191–212 (PELA…KNKT) and 239–262 (VTDI…KREF).

As to quaternary structure, binds DNA as a dimer.

Its subcellular location is the cytoplasm. Functionally, activates expression of the rhaBAD and rhaT operons. This is HTH-type transcriptional activator RhaS from Yersinia pestis bv. Antiqua (strain Antiqua).